The chain runs to 180 residues: Free methionine-R-sulfoxide reductase (180 aa).

The 79-residue stretch at 99–177 folds into the GAF domain; sequence GVCGTAASTK…KLAKLINKSC (79 aa).

This sequence belongs to the free Met sulfoxide reductase family.

Its subcellular location is the cytoplasm. The protein resides in the nucleus. It catalyses the reaction [thioredoxin]-disulfide + L-methionine + H2O = L-methionine (R)-S-oxide + [thioredoxin]-dithiol. Catalyzes the reversible oxidation-reduction of the R-enantiomer of free methionine sulfoxide to methionine. Does not act on S-enantiomer of free methionine sulfoxide or R-enantiomer of dabsylated methionine sulfoxide. Involved in protection against oxidative stress. This is Free methionine-R-sulfoxide reductase from Saccharomyces cerevisiae (strain ATCC 204508 / S288c) (Baker's yeast).